Consider the following 419-residue polypeptide: O-antigen ligase (419 aa).

The Cytoplasmic portion of the chain corresponds to 1-19; sequence MLTSFKLHSLKPYTLKSSM. The helical transmembrane segment at 20–38 threads the bilayer; it reads ILEIITYILCFFSMIIAFV. Over 39 to 43 the chain is Periplasmic; sequence DNTFS. A helical transmembrane segment spans residues 44–61; the sequence is IKIYNITAIVCLLSLILR. Topologically, residues 62-71 are cytoplasmic; the sequence is GRQENYNIKN. The chain crosses the membrane as a helical span at residues 72–91; that stretch reads LILPLSIFLIGLLDLIWYSA. Topologically, residues 92-107 are periplasmic; the sequence is FKVDNSPFRATYHSYL. The chain crosses the membrane as a helical span at residues 108–125; sequence NTAKIFIFGSFIVFLTLT. The Cytoplasmic portion of the chain corresponds to 126-134; the sequence is SQLKSKKES. A helical membrane pass occupies residues 135–153; it reads VLYTLYSLSFLIAGYAMYI. Over 154-167 the chain is Periplasmic; the sequence is NSIHENDRISFGVG. A helical transmembrane segment spans residues 168 to 187; the sequence is TATGAAYSTMLIGIVSGVAI. Residues 188–194 are Cytoplasmic-facing; the sequence is LYTKKNH. Residues 195-211 traverse the membrane as a helical segment; the sequence is PFLFLLNSCAVLYVLAL. Over 212–216 the chain is Periplasmic; the sequence is TQTRA. A helical transmembrane segment spans residues 217–234; it reads TLLLFPIICVAALIAYYN. Residues 235–240 are Cytoplasmic-facing; it reads KSPKKF. The chain crosses the membrane as a helical span at residues 241 to 259; sequence TSSIVLLIAILASIVIIFN. Topologically, residues 260–348 are periplasmic; that stretch reads KPIQNRYNEA…NEIIEAGSLK (89 aa). Residues 349–367 form a helical membrane-spanning segment; it reads GLMGIFSTLFLYFSLFYIA. Residues 368–372 are Cytoplasmic-facing; the sequence is YKKRA. Residues 373 to 391 traverse the membrane as a helical segment; that stretch reads LGLLILTLGIVGIGLSDVI. Residues 392 to 396 are Periplasmic-facing; the sequence is IWARS. A helical transmembrane segment spans residues 397–412; sequence IPIIIISAIVLLLVIN. The Cytoplasmic segment spans residues 413 to 419; it reads NRNNTIN.

In terms of assembly, homodimer.

The protein localises to the cell inner membrane. It carries out the reaction a lipid-linked O antigen + a lipid A-core oligosaccharide = a lipopolysaccharide + a polyisoprenyl diphosphate.. Its pathway is bacterial outer membrane biogenesis; lipopolysaccharide biosynthesis. Its activity is regulated as follows. Activity does not require ATP and magnesium ions. Transferase involved in the biosynthesis of the lipopolysaccharide (LPS). In vitro, catalyzes the transfer of a polymerized O-antigen molecule from its polyprenyl diphosphate membrane anchor to a terminal sugar of the lipid A-core oligosaccharide, finalizing the biosynthesis of the lipopolysaccharide. The enzyme is functional and can be used to give diverse hybrid O-antigens in vitro, but K12 strains do not produce the O-antigen in vivo due to mutations in the rfb gene cluster. K12 strains are phenotypically rough, their lipopolysaccharide having a complete core structure, but no O-antigen. In highly mucoid K12 strains, WaaL can ligate colanic acid (CA or M-antigen) repeats to a significant proportion of lipopolysaccharide (LPS) core acceptor molecules, forming the LPS glycoform M(LPS). The attachment point was identified as O-7 of the L-glycero-D-manno-heptose of the outer LPS core, the same position used for O-antigen ligation. Cannot catalyze ATP hydrolysis in vitro. This is O-antigen ligase from Escherichia coli (strain K12).